The chain runs to 602 residues: Alpha-glucosides permease MPH3 (602 aa).

At 1–106 (MKNLSFLINR…AAAWSLLVST (106 aa)) the chain is on the cytoplasmic side. The helical transmembrane segment at 107-127 (TLIMEGYDTAILGAFYALPIF) threads the bilayer. Over 128-142 (QRKFGSQNDKTGEWE) the chain is Extracellular. A helical transmembrane segment spans residues 143-163 (ISASWQIGLTLCYMAGEIVGL). At 164–178 (QLTGPSVDLVGNRYT) the chain is on the cytoplasmic side. Residues 179-199 (LIIALFFLAAFTFILYFCNSL) form a helical membrane-spanning segment. Gly-200 is a topological domain (extracellular). The helical transmembrane segment at 201–221 (MIAVGQALCGMPWGCFQCLTV) threads the bilayer. Topologically, residues 222–234 (SYASEICPLALRY) are cytoplasmic. The helical transmembrane segment at 235–255 (YLTTYSNLCWLFGQLFAAGIM) threads the bilayer. The Extracellular segment spans residues 256–270 (KNSQKKYADSELGYK). A helical transmembrane segment spans residues 271–291 (LPFALQWILPVPLALGIFFAP). The Cytoplasmic portion of the chain corresponds to 292–363 (ESPWWLVKKG…EDKINRRRTR (72 aa)). A helical transmembrane segment spans residues 364–384 (ITCLCWAGQATCGSILIGYST). Over 385 to 397 (YFYEKAGVSTEMS) the chain is Extracellular. A helical membrane pass occupies residues 398-418 (FTFSIIQYCLGICATFLSWWA). Residues 419–426 (SKYFGRYD) are Cytoplasmic-facing. Residues 427–447 (LYAFGLAFQTIVFFIIGGLGC) traverse the membrane as a helical segment. Topologically, residues 448-459 (SSTHGSKMGSGS) are extracellular. The chain crosses the membrane as a helical span at residues 460–480 (LLMAVAFFYNLGIAPVVFCLV). Over 481–492 (SEMPSSRLRTKT) the chain is Cytoplasmic. A helical membrane pass occupies residues 493 to 513 (IILARNTYNVVSIICSVLILY). At 514–525 (QLNSKKWNWGAK) the chain is on the extracellular side. Residues 526–546 (SGFFWGVLCFCTLIWAVVDLP) traverse the membrane as a helical segment. At 547 to 602 (ETAGKTFVEINELFKLGVSARKFKSTKVDPFVVKNTPKYVSHNDPKGDIEASIAEE) the chain is on the cytoplasmic side.

It belongs to the major facilitator superfamily. Sugar transporter (TC 2.A.1.1) family.

The protein resides in the cell membrane. High-affinity uptake of maltose and maltotriose. Also transports alpha-methylglucoside, glucose and turanose but not melezitose or trehalose. The chain is Alpha-glucosides permease MPH3 (MPH3) from Saccharomyces cerevisiae (strain YJM789) (Baker's yeast).